We begin with the raw amino-acid sequence, 674 residues long: MVDIIVDFEIKYKDAMARVGKFKTPHGTVTTPALMPVVHPGKQTLDVKKLGAQIVITNSYIIYKNEELKKKALEEGVHSLIDFPNTIETDSGSFQLSVYGDIDITNEEVIKFQEAIKTDIGTSLDIPTAPYVKREEAENDLEITIERAKEAANVKSDLLLNSVVQGSTFPDLREKCAKEISKYDADIYPIGAVVPLMEMYRYADLVDAVMYSMRGLPENKPRHLMGAGHPMVFALATAMGCDLFDSAAYILYANKDRFMMPDGTLRLEDLIEMPCSCRVCCEYTVDELKQMDQKKRAKLIAEHNLHISFAEIRRIRQAIVDGELMKLVELRCRSHPFLLDGLRRLMEYKEDMERLNPSSKKSAFFYTGYESLARSEVPKHLKQLENIKPKNKNLVILPHTRKPYTKYVNREYIKKYTPKIPTYYSNTTNTDYSNSDVVVADIPFGIIPLGLDEFYPLAQNESPSIHDLDSKRFIRDIINNYSKKYDNVLIHRKVIEKFDITNFNLIEDELQLPEAKISDFNRLNDIADYQFGCGAGNALFGGDEDKITIEKSRKTKKIRHVFEDNENIVNMRANDGFLILSDLGAKRLHKFLEYPHNRVVVSEDSEPFALKGKSVFNKFVLDCDENIRRNDEVLIVNKDDKLLAFGKALLSSYEIKDFNTGQAIKTRKWKKEIE.

Aspartate 90 serves as the catalytic Nucleophile. Residues aspartate 125 and alanine 192 each contribute to the substrate site. Zn(2+)-binding residues include cysteine 275, cysteine 277, and cysteine 280. Residues 596 to 671 (HNRVVVSEDS…QAIKTRKWKK (76 aa)) enclose the PUA domain.

The protein belongs to the archaeosine tRNA-ribosyltransferase family. It depends on Zn(2+) as a cofactor.

The enzyme catalyses guanosine(15) in tRNA + 7-cyano-7-deazaguanine = 7-cyano-7-carbaguanosine(15) in tRNA + guanine. The protein operates within tRNA modification; archaeosine-tRNA biosynthesis. Its function is as follows. Exchanges the guanine residue with 7-cyano-7-deazaguanine (preQ0) at position 15 in the dihydrouridine loop (D-loop) of archaeal tRNAs. The chain is tRNA-guanine(15) transglycosylase from Methanosphaera stadtmanae (strain ATCC 43021 / DSM 3091 / JCM 11832 / MCB-3).